Consider the following 239-residue polypeptide: Ribonuclease PH (239 aa).

Phosphate is bound by residues Arg-87 and 125–127; that span reads GTR.

It belongs to the RNase PH family. Homohexameric ring arranged as a trimer of dimers.

The enzyme catalyses tRNA(n+1) + phosphate = tRNA(n) + a ribonucleoside 5'-diphosphate. Phosphorolytic 3'-5' exoribonuclease that plays an important role in tRNA 3'-end maturation. Removes nucleotide residues following the 3'-CCA terminus of tRNAs; can also add nucleotides to the ends of RNA molecules by using nucleoside diphosphates as substrates, but this may not be physiologically important. Probably plays a role in initiation of 16S rRNA degradation (leading to ribosome degradation) during starvation. This chain is Ribonuclease PH, found in Dehalococcoides mccartyi (strain ATCC BAA-2266 / KCTC 15142 / 195) (Dehalococcoides ethenogenes (strain 195)).